The sequence spans 203 residues: uncharacterized protein (203 aa).

In terms of domain architecture, PilZ spans Glu-90–Met-188.

This sequence to A.aeolicus aq_820 and aq_1583.

This is an uncharacterized protein from Aquifex aeolicus (strain VF5).